Here is a 209-residue protein sequence, read N- to C-terminus: LexA repressor (209 aa).

The H-T-H motif DNA-binding region spans 28–48; sequence RAEIAKELGFRSANAAEEHLK. Catalysis depends on for autocatalytic cleavage activity residues Ser126 and Lys163.

The protein belongs to the peptidase S24 family. As to quaternary structure, homodimer.

The catalysed reaction is Hydrolysis of Ala-|-Gly bond in repressor LexA.. In terms of biological role, represses a number of genes involved in the response to DNA damage (SOS response), including recA and lexA. In the presence of single-stranded DNA, RecA interacts with LexA causing an autocatalytic cleavage which disrupts the DNA-binding part of LexA, leading to derepression of the SOS regulon and eventually DNA repair. The sequence is that of LexA repressor from Vibrio cholerae serotype O1 (strain ATCC 39541 / Classical Ogawa 395 / O395).